Consider the following 168-residue polypeptide: Cell division inhibitor SulA (168 aa).

The interval alanine 105–tyrosine 111 is ftsZ binding. The interval arginine 161–histidine 168 is lon protease binding.

The protein belongs to the SulA family. Interacts with FtsZ. Is rapidly cleaved and degraded by the Lon protease once DNA damage is repaired.

Its function is as follows. Component of the SOS system and an inhibitor of cell division. Accumulation of SulA causes rapid cessation of cell division and the appearance of long, non-septate filaments. In the presence of GTP, binds a polymerization-competent form of FtsZ in a 1:1 ratio, thus inhibiting FtsZ polymerization and therefore preventing it from participating in the assembly of the Z ring. This mechanism prevents the premature segregation of damaged DNA to daughter cells during cell division. The chain is Cell division inhibitor SulA from Cronobacter sakazakii (strain ATCC BAA-894) (Enterobacter sakazakii).